A 447-amino-acid polypeptide reads, in one-letter code: MTTILKHLPVGQRIGIAFSGGLDTSAALLWMRQKGAVPYAYTANLGQPDEEDYDAIPRRAMEYGAENARLIDCRKQLVAEGIAAIQCGAFHNTTGGLTYFNTTPLGRAVTGTMLVAAMKEDGVNIWGDGSTYKGNDIERFYRYGLLTNAELQIYKPWLDTDFIDELGGRHEMSEFMIACGFDYKMSVEKAYSTDSNMLGATHEAKDLEYLNSSVKIVNPIMGVKFWDESVKIPAEEVTVRFEQGHPVALNGKTFSDDVEMMLEANRIGGRHGLGMSDQIENRIIEAKSRGIYEAPGMALLHIAYERLLTGIHNEDTIEQYHAHGRQLGRLLYQGRWFDSQALMLRDSLQRWVASQITGEVTLELRRGNDYSILNTVSENLTYKPERLTMEKGDSVFSPDDRIGQLTMRNLDITDTREKLFGYAKTGLLSSSATSGLPQVENMENKGQ.

Residues 17 to 25 (AFSGGLDTS) and Ala43 contribute to the ATP site. Residue Tyr99 participates in L-citrulline binding. ATP is bound by residues Gly129 and Thr131. Residues Thr131, Asn135, and Asp136 each coordinate L-aspartate. An L-citrulline-binding site is contributed by Asn135. Asp136 contacts ATP. Positions 139 and 192 each coordinate L-citrulline. Asp194 is an ATP binding site. 3 residues coordinate L-citrulline: Thr201, Glu203, and Glu280.

It belongs to the argininosuccinate synthase family. Type 2 subfamily. As to quaternary structure, homotetramer.

It localises to the cytoplasm. It carries out the reaction L-citrulline + L-aspartate + ATP = 2-(N(omega)-L-arginino)succinate + AMP + diphosphate + H(+). The protein operates within amino-acid biosynthesis; L-arginine biosynthesis; L-arginine from L-ornithine and carbamoyl phosphate: step 2/3. The polypeptide is Argininosuccinate synthase (Shigella flexneri serotype 5b (strain 8401)).